We begin with the raw amino-acid sequence, 189 residues long: NADH-quinone oxidoreductase subunit B (189 aa).

Cys39, Cys40, Cys104, and Cys135 together coordinate [4Fe-4S] cluster.

Belongs to the complex I 20 kDa subunit family. NDH-1 is composed of 14 different subunits. Subunits NuoB, C, D, E, F, and G constitute the peripheral sector of the complex. The cofactor is [4Fe-4S] cluster.

The protein resides in the cell inner membrane. It catalyses the reaction a quinone + NADH + 5 H(+)(in) = a quinol + NAD(+) + 4 H(+)(out). Its function is as follows. NDH-1 shuttles electrons from NADH, via FMN and iron-sulfur (Fe-S) centers, to quinones in the respiratory chain. The immediate electron acceptor for the enzyme in this species is believed to be a menaquinone. Couples the redox reaction to proton translocation (for every two electrons transferred, four hydrogen ions are translocated across the cytoplasmic membrane), and thus conserves the redox energy in a proton gradient. The chain is NADH-quinone oxidoreductase subunit B from Pelodictyon phaeoclathratiforme (strain DSM 5477 / BU-1).